The following is an 83-amino-acid chain: Large ribosomal subunit protein eL43 (83 aa).

Zn(2+) is bound by residues cysteine 38, cysteine 41, cysteine 56, and cysteine 59. Residues cysteine 38–cysteine 59 form a C4-type zinc finger.

It belongs to the eukaryotic ribosomal protein eL43 family. Putative zinc-binding subfamily. As to quaternary structure, part of the 50S ribosomal subunit. It depends on Zn(2+) as a cofactor.

Binds to the 23S rRNA. The sequence is that of Large ribosomal subunit protein eL43 from Pyrococcus furiosus (strain ATCC 43587 / DSM 3638 / JCM 8422 / Vc1).